The following is a 475-amino-acid chain: Luvungin A synthase CYP716AC1 (475 aa).

Residues 3–23 (FIILSLLLLSLALYSLYYVII) traverse the membrane as a helical segment. A heme-binding site is contributed by cysteine 423.

The protein belongs to the cytochrome P450 family. Heme is required as a cofactor. In terms of tissue distribution, expressed in flowers, maturing fruits and in juice vesicles.

The protein resides in the membrane. The enzyme catalyses (21S)-21-acetoxyl-apo-melianone + reduced [NADPH--hemoprotein reductase] + O2 = luvungin A + oxidized [NADPH--hemoprotein reductase] + H2O + H(+). Its pathway is secondary metabolite biosynthesis; terpenoid biosynthesis. Its function is as follows. Monooxygenase involved in the biosynthesis of limonoids triterpene natural products such as limonin, a compound with insecticidal activity responsible for the bitter taste in citrus. Catalyzes the conversion of (21S)-21-acetoxyl-apo-melianone to luvungin A. This is Luvungin A synthase CYP716AC1 from Citrus sinensis (Sweet orange).